Reading from the N-terminus, the 337-residue chain is UbiA prenyltransferase domain-containing protein 1 (337 aa).

At alanine 2 the chain carries N-acetylalanine. A run of 8 helical transmembrane segments spans residues 82 to 102, 133 to 153, 159 to 179, 187 to 207, 208 to 228, 244 to 266, 276 to 296, and 314 to 334; these read LLVG…LVNT, FGVF…CLSP, LALI…GIGF, LVIL…VQVG, SLAV…EAVL, IVTL…LLFL, THCS…FSLE, and LNLL…AGSL.

It belongs to the UbiA prenyltransferase family. In terms of assembly, interacts with HMGCR and SOAT1.

The protein resides in the endoplasmic reticulum membrane. Its subcellular location is the golgi apparatus membrane. The protein localises to the mitochondrion membrane. It carries out the reaction menadiol + (2E,6E,10E)-geranylgeranyl diphosphate = menaquinol-4 + diphosphate. The catalysed reaction is all-trans-decaprenyl diphosphate + 4-hydroxybenzoate = 4-hydroxy-3-(all-trans-decaprenyl)benzoate + diphosphate. The protein operates within quinol/quinone metabolism; menaquinone biosynthesis. It functions in the pathway cofactor biosynthesis; ubiquinone biosynthesis. Its function is as follows. Prenyltransferase that mediates the formation of menaquinone-4 (MK-4) and coenzyme Q10. MK-4 is a vitamin K2 isoform required for endothelial cell development. Mediates the conversion of phylloquinone (PK) into MK-4, probably by cleaving the side chain of phylloquinone (PK) to release 2-methyl-1,4-naphthoquinone (menadione; K3) and then prenylating it with geranylgeranyl pyrophosphate (GGPP) to form MK-4. Also plays a role in cardiovascular development independently of MK-4 biosynthesis, by acting as a coenzyme Q10 biosynthetic enzyme: coenzyme Q10, also named ubiquinone, plays an important antioxidant role in the cardiovascular system. Mediates biosynthesis of coenzyme Q10 in the Golgi membrane, leading to protect cardiovascular tissues from NOS3/eNOS-dependent oxidative stress. The chain is UbiA prenyltransferase domain-containing protein 1 (UBIAD1) from Ailuropoda melanoleuca (Giant panda).